The chain runs to 1813 residues: U3 small nucleolar RNA-associated protein 10 (1813 aa).

HEAT repeat units lie at residues 245–283, 389–427, 428–464, 584–621, and 659–695; these read DVLI…KASL, SETI…LQFN, ESDT…DIMP, ADMQ…LASK, and IIHH…QDDS. Disordered regions lie at residues 686-705 and 887-912; these read IRGP…STGV and DLGS…SSMD. The segment covering 690-705 has biased composition (basic and acidic residues); it reads RSQDDSDRTRSESTGV. HEAT repeat units lie at residues 1058 to 1095, 1189 to 1228, 1265 to 1302, 1309 to 1347, 1398 to 1437, 1678 to 1715, and 1769 to 1806; these read QTID…AFEH, KIAV…KAHG, LSLV…SSND, ARVL…KYGK, EALP…HVPW, LASI…LAVA, and ALLP…ILGE.

This sequence belongs to the HEATR1/UTP10 family. In terms of assembly, component of the ribosomal small subunit (SSU) processome.

It is found in the nucleus. The protein resides in the nucleolus. Its function is as follows. Involved in nucleolar processing of pre-18S ribosomal RNA. Involved in ribosome biosynthesis. The sequence is that of U3 small nucleolar RNA-associated protein 10 from Coccidioides immitis (strain RS) (Valley fever fungus).